The chain runs to 208 residues: Ribosomal RNA small subunit methyltransferase G (208 aa).

Residues Gly-76, Leu-81, 127–128 (VE), and Arg-142 contribute to the S-adenosyl-L-methionine site.

Belongs to the methyltransferase superfamily. RNA methyltransferase RsmG family.

The protein localises to the cytoplasm. The catalysed reaction is guanosine(527) in 16S rRNA + S-adenosyl-L-methionine = N(7)-methylguanosine(527) in 16S rRNA + S-adenosyl-L-homocysteine. Specifically methylates the N7 position of guanine in position 527 of 16S rRNA. The protein is Ribosomal RNA small subunit methyltransferase G of Legionella pneumophila (strain Corby).